The sequence spans 339 residues: Putative NADP-dependent oxidoreductase YfmJ (339 aa).

NADP(+) contacts are provided by residues 156-159 (GAVG), lysine 182, tyrosine 198, asparagine 222, 244-250 (CGAISSY), 277-279 (FIV), and asparagine 327.

Belongs to the NADP-dependent oxidoreductase L4BD family.

Its function is as follows. Putative quinone oxidoreductase that may contribute to the degradation of aromatic compounds. The sequence is that of Putative NADP-dependent oxidoreductase YfmJ (yfmJ) from Bacillus subtilis (strain 168).